We begin with the raw amino-acid sequence, 253 residues long: MTRYKATIAYDGTDFAGFQSQTNQRTVQKEIEKILTKLNSFEPVILQGSGRTDSGVHAFGQVIHFDLKGKVRDLERLRFGLDTQTPADIAVKKVELVPDDWHARYQKHEKTYEYYLENSITRSPFQRHSKAYFRYPLNFERMQEAMSKLVGEHDFTGFTASGSSVDDKVRTIYQAEIIRLDEENFKFIFRGNGFLYKQVRNMVGTVIKIGNDRMPVSQIDKILTSKNRDFAGPTAAPEGLYLKEVKYAENTDI.

Residue aspartate 53 is the Nucleophile of the active site. Tyrosine 112 lines the substrate pocket.

The protein belongs to the tRNA pseudouridine synthase TruA family. Homodimer.

It carries out the reaction uridine(38/39/40) in tRNA = pseudouridine(38/39/40) in tRNA. In terms of biological role, formation of pseudouridine at positions 38, 39 and 40 in the anticodon stem and loop of transfer RNAs. The sequence is that of tRNA pseudouridine synthase A from Lactococcus lactis subsp. lactis (strain IL1403) (Streptococcus lactis).